The primary structure comprises 1905 residues: Tudor domain-containing 6-like (1905 aa).

3 consecutive Tudor domains span residues 1–30 (MVEV…LREM), 215–279 (YERG…LFDL), and 435–491 (SVTP…AYEL). Positions 564 to 795 (SRAEGSFGNS…SKLTPPLSKL (232 aa)) are disordered. Residues 573–591 (SEKRNQLNDLDRGGRKETT) are compositionally biased toward basic and acidic residues. Over residues 592–602 (SKFQPYSQGSK) the composition is skewed to polar residues. Residues 622 to 631 (FQTKEREQFE) show a composition bias toward basic and acidic residues. Polar residues-rich tracts occupy residues 651–660 (VQKNMSQSGF) and 687–704 (LYSQ…SSYS). Over residues 715–726 (RSKERQVSEHKQ) the composition is skewed to basic and acidic residues. 2 stretches are compositionally biased toward polar residues: residues 746 to 766 (KASQ…GSDQ) and 774 to 787 (NASQ…QESK). 2 Tudor domains span residues 853-910 (YVNL…LLSI) and 1060-1118 (EIEV…IAAI). Disordered stretches follow at residues 1213–1245 (IEDN…TPAV), 1449–1599 (EDFE…TETE), 1655–1682 (VEDL…SGPV), and 1827–1905 (ESPA…APSV). Acidic residues-rich tracts occupy residues 1491–1500 (EAEGLEDQDQ) and 1522–1535 (EQAE…DPGT). A compositionally biased stretch (basic and acidic residues) spans 1553-1588 (SQEHKDFPEQEEDRVAEHKNDISEPDLQSKEQKEDL). The segment covering 1663–1673 (QESQICISGSD) has biased composition (polar residues). Over residues 1876-1887 (FEPETDDMEQME) the composition is skewed to acidic residues.

Interacts with FRGY2 (a component of messenger ribonucleoprotein (mRNP) particle) during germ cell development. Expressed in testis.

The protein resides in the cytoplasm. Functionally, tudor domain-containing protein involved in germ cell development, more specifically the formation of chromatoid body (during spermiogenesis), Balbiani body (during oogenesis), germ plasm (upon fertilization), and for proper miRNA expression and spliceosome maturation. Component of cytoplasmic mRNP particle through interaction with FRGY2, and binds to maternal mRNA related to cell cycle (RCC1, RHAMM, INCENP-A, MAD2L1, HELLS) and a germ plasm specific mRNA (Dead end/Dnd1), it is proposed a role in translational activation of the maternal mRNAs repressed in mRNP particle. This Xenopus laevis (African clawed frog) protein is Tudor domain-containing 6-like.